Consider the following 392-residue polypeptide: Peptidoglycan hydrolase PcsB (392 aa).

The N-terminal stretch at 1 to 27 (MKKKILASLLLSTVMVSQVAVLTTAHA) is a signal peptide. Coiled-coil stretches lie at residues 34–96 (IAAQ…LSKN) and 191–227 (TKQA…AEAE). Residues 47 to 267 (QQQEAQKQVD…TAQVQAVSES (221 aa)) are interacts with large extracellular loop of FtsX. The Peptidase C51 domain maps to 267-390 (SAAAPVRAKV…TSEGFVTYIY (124 aa)).

As to quaternary structure, homodimer. Interacts (via N-terminal coiled coil domain) with FtsX (via large extracellular loop). This interaction directs PcsB to equatorial and septal sites of dividing cells. Interacts with FtsE.

It localises to the cell membrane. The protein resides in the cell septum. It is found in the secreted. Lacks peptidoglycan-hydrolase activity in vitro, probably due to auto-inhibition by the CC domain. In the homodimer, interaction between the CC domain in one monomer and the hydrolase active site in the peptidase C51/CHAP domain in the other monomer probably mediates auto-inhibition of the hydrolase activity. Peptidoglycan-hydrolase activity. Required in maintaining normal growth and cellular morphology. Involved in splitting of the septum during cell division. This Streptococcus pneumoniae serotype 2 (strain D39 / NCTC 7466) protein is Peptidoglycan hydrolase PcsB.